The following is a 270-amino-acid chain: Aliphatic sulfonates import ATP-binding protein SsuB 2 (270 aa).

Residues 17 to 241 form the ABC transporter domain; the sequence is LLDLRIARKL…PRDRRDPSLA (225 aa). An ATP-binding site is contributed by 50–57; the sequence is GPSGCGKS.

It belongs to the ABC transporter superfamily. Aliphatic sulfonates importer (TC 3.A.1.17.2) family. The complex is composed of two ATP-binding proteins (SsuB), two transmembrane proteins (SsuC) and a solute-binding protein (SsuA).

The protein resides in the cell inner membrane. The enzyme catalyses ATP + H2O + aliphatic sulfonate-[sulfonate-binding protein]Side 1 = ADP + phosphate + aliphatic sulfonateSide 2 + [sulfonate-binding protein]Side 1.. Part of the ABC transporter complex SsuABC involved in aliphatic sulfonates import. Responsible for energy coupling to the transport system. In Burkholderia cenocepacia (strain HI2424), this protein is Aliphatic sulfonates import ATP-binding protein SsuB 2.